The following is a 453-amino-acid chain: MTTDTIVAQATAPGRGGVGIVRVSGPAAEQVAEIVLGKLPRVRYAEYLPFKDEQGQPLDQGIALLFKAPNSFTGEDVLELQGHGGPVIMDMLVRRILQIKGLRPARPGEFSERAFMNDKLDLAQAEAIADLIEASSEQAARSAMHSLQGQFSSKIQQLVESLIRLRIYVEAAIDFPDEEIDFLSDGKVAGDLYAIMAELDGVRSEAKQGALLREGMKVVIAGRPNAGKSSLLNALAGRESAIVTEIAGTTRDVLREHIHLDGMPLHIIDTAGLRDTLDKVEQIGIERAWAEIEQADRVLFMVDGTTTDAIDPREIWPEFVDRLPKDIGLTVVRNKADLTGEDLAPSQELGHAVYRISAKTELGLPALREHLKACMGFQGNTEGGFMARRRHLDALERAAERLLVAKDQLEIYVAGELVAEELRLAQESLSEITGEFSSDDLLGRIFSSFCIGK.

(6S)-5-formyl-5,6,7,8-tetrahydrofolate contacts are provided by Arg-22, Glu-79, and Lys-119. Residues 215–376 (GMKVVIAGRP…LREHLKACMG (162 aa)) enclose the TrmE-type G domain. Asn-225 lines the K(+) pocket. Residues 225-230 (NAGKSS), 244-250 (TEIAGTT), 269-272 (DTAG), and 334-337 (NKAD) each bind GTP. Mg(2+) is bound at residue Ser-229. Thr-244, Ile-246, and Thr-249 together coordinate K(+). A Mg(2+)-binding site is contributed by Thr-250. Lys-453 contacts (6S)-5-formyl-5,6,7,8-tetrahydrofolate.

This sequence belongs to the TRAFAC class TrmE-Era-EngA-EngB-Septin-like GTPase superfamily. TrmE GTPase family. In terms of assembly, homodimer. Heterotetramer of two MnmE and two MnmG subunits. K(+) is required as a cofactor.

Its subcellular location is the cytoplasm. In terms of biological role, exhibits a very high intrinsic GTPase hydrolysis rate. Involved in the addition of a carboxymethylaminomethyl (cmnm) group at the wobble position (U34) of certain tRNAs, forming tRNA-cmnm(5)s(2)U34. The protein is tRNA modification GTPase MnmE of Aeromonas salmonicida (strain A449).